The primary structure comprises 230 residues: MVQKKPINRSLRGRFITFEGGEGAGKSTQIRLLAKRLEKARLRTLVTREPGGSPGAEAIRSALLAGIGKLIGGADAEALLFAAARDDHVRTLIEPALARGEWVLCDRFYDSTRAYQGKLGAVSLDLLNALQQVTIGDMKPDLTVILDIPVEIGLARAAVRRGSETPDRFESEAIDFHRGLREVFRQIAAQEPERCALIDANAEPEEVADRIWQAVRLRLLEPARAGAKSA.

20 to 27 (GGEGAGKS) is an ATP binding site.

It belongs to the thymidylate kinase family.

The enzyme catalyses dTMP + ATP = dTDP + ADP. Its function is as follows. Phosphorylation of dTMP to form dTDP in both de novo and salvage pathways of dTTP synthesis. The sequence is that of Thymidylate kinase from Rhodopseudomonas palustris (strain TIE-1).